The chain runs to 323 residues: Olfactory receptor 6T1 (323 aa).

The Extracellular portion of the chain corresponds to 1-25 (MNPENWTQVTSFVLLGFPSSHLIQF). An N-linked (GlcNAc...) asparagine glycan is attached at N5. Residues 26–46 (LVFLGLMVTYIVTATGKLLII) form a helical membrane-spanning segment. At 47–54 (VLSWIDQR) the chain is on the cytoplasmic side. Residues 55–75 (LHIQMYFFLRNFSFLELLLVT) traverse the membrane as a helical segment. Residues 76–99 (VVVPKMLVVILTGDHTISFVSCII) lie on the Extracellular side of the membrane. The cysteines at positions 97 and 189 are disulfide-linked. Residues 100–120 (QSYLYFFLGTTDFFLLAVMSL) form a helical membrane-spanning segment. The Cytoplasmic segment spans residues 121-139 (DRYLAICRPLRYETLMNGH). Residues 140-160 (VCSQLVLASWLAGFLWVLCPT) form a helical membrane-spanning segment. The Extracellular segment spans residues 161 to 197 (VLMASLPFCGPNGIDHFFRDSWPLLRLSCGDTHLLKL). The helical transmembrane segment at 198–217 (VAFMLSTLVLLGSLALTSVS) threads the bilayer. Residues 218-237 (YACILATVLRAPTAAERRKA) are Cytoplasmic-facing. Residues 238–258 (FSTCASHLTVVVIIYGSSIFL) form a helical membrane-spanning segment. At 259–271 (YIRMSEAQSKLLN) the chain is on the extracellular side. Residues 272–292 (KGASVLSCIITPLLNPFIFTL) traverse the membrane as a helical segment. At 293 to 323 (RNDKVQQALREALGWPRLTAVMKLRVTSQRK) the chain is on the cytoplasmic side.

The protein belongs to the G-protein coupled receptor 1 family.

It is found in the cell membrane. Functionally, odorant receptor. This Homo sapiens (Human) protein is Olfactory receptor 6T1 (OR6T1).